A 546-amino-acid chain; its full sequence is CTP synthase (546 aa).

The amidoligase domain stretch occupies residues 1–266 (MAKYYIFITG…DSYVCDRFCI (266 aa)). Residue serine 14 coordinates CTP. Position 14 (serine 14) interacts with UTP. Residues 15–20 (SLGKGI) and aspartate 72 each bind ATP. Mg(2+) contacts are provided by aspartate 72 and glutamate 140. CTP is bound by residues 147 to 149 (DIE), 187 to 192 (KTKPTQ), and lysine 223. Residues 187-192 (KTKPTQ) and lysine 223 each bind UTP. The Glutamine amidotransferase type-1 domain occupies 291 to 544 (NIGIIGKYTE…VKAAFDFKNK (254 aa)). L-glutamine is bound at residue glycine 352. Cysteine 379 (nucleophile; for glutamine hydrolysis) is an active-site residue. L-glutamine-binding positions include 380-383 (LGMQ), glutamate 403, and arginine 470. Catalysis depends on residues histidine 517 and glutamate 519.

The protein belongs to the CTP synthase family. As to quaternary structure, homotetramer.

It catalyses the reaction UTP + L-glutamine + ATP + H2O = CTP + L-glutamate + ADP + phosphate + 2 H(+). The catalysed reaction is L-glutamine + H2O = L-glutamate + NH4(+). The enzyme catalyses UTP + NH4(+) + ATP = CTP + ADP + phosphate + 2 H(+). It participates in pyrimidine metabolism; CTP biosynthesis via de novo pathway; CTP from UDP: step 2/2. Its activity is regulated as follows. Allosterically activated by GTP, when glutamine is the substrate; GTP has no effect on the reaction when ammonia is the substrate. The allosteric effector GTP functions by stabilizing the protein conformation that binds the tetrahedral intermediate(s) formed during glutamine hydrolysis. Inhibited by the product CTP, via allosteric rather than competitive inhibition. Its function is as follows. Catalyzes the ATP-dependent amination of UTP to CTP with either L-glutamine or ammonia as the source of nitrogen. Regulates intracellular CTP levels through interactions with the four ribonucleotide triphosphates. The sequence is that of CTP synthase from Wigglesworthia glossinidia brevipalpis.